Here is a 303-residue protein sequence, read N- to C-terminus: Recombination-associated protein RdgC (303 aa).

The protein belongs to the RdgC family.

It is found in the cytoplasm. The protein localises to the nucleoid. In terms of biological role, may be involved in recombination. The polypeptide is Recombination-associated protein RdgC (Yersinia pseudotuberculosis serotype O:1b (strain IP 31758)).